The following is a 497-amino-acid chain: MERREGGRDNSSCSNVNQLFGVKDSESLLYDDVFIVRDRNGDSYFAYWDIEKNTFLSEPFYSYRSRNSSYLPKIKAFMSEDRSQIHEVKNGFRSEDHSKINKINGVENLFHNYNMNVLTDDYNFKMGMNGFHRPQSKIHINRFIDSYLQSQICIATTPGSGSDNDSYIHGSRVYGESESYTRSEGRSSSIRTRTKGVELTLRERPGILDRTKKYMYLWLQCDNCYGLNYKKVLKSKMTICEQCGYHLQMSSSDRIELLIDPGTWDPMDEDMVSRDPIKFDSGGGEAYKDRLYFYQRKTGLTEAVQTGIGQLNGIPVAIGVMDFKFMGGSMGSVVGEKITRLIEHATNKFLPLIIVSASGGARMQEGSLSLMQMAKISSALYDYQSNKRLVYVSILTSPTAGGVTASFGMLGDIIIVEPRAYVAFAGKRVIEQTLNQTIPNDSQEAEFLFHKGLFDLIIPRHLLKSVISELFTLHDLFPLNQNSNQYSQYRALLNPIF.

A CoA carboxyltransferase N-terminal domain is found at 217–489 (LWLQCDNCYG…NQNSNQYSQY (273 aa)). Residues C221, C224, C240, and C243 each coordinate Zn(2+). The C4-type zinc finger occupies 221–243 (CDNCYGLNYKKVLKSKMTICEQC).

This sequence belongs to the AccD/PCCB family. As to quaternary structure, acetyl-CoA carboxylase is a heterohexamer composed of biotin carboxyl carrier protein, biotin carboxylase and 2 subunits each of ACCase subunit alpha and ACCase plastid-coded subunit beta (accD). Zn(2+) is required as a cofactor.

The protein localises to the plastid. The catalysed reaction is N(6)-carboxybiotinyl-L-lysyl-[protein] + acetyl-CoA = N(6)-biotinyl-L-lysyl-[protein] + malonyl-CoA. Its pathway is lipid metabolism; malonyl-CoA biosynthesis; malonyl-CoA from acetyl-CoA: step 1/1. Functionally, component of the acetyl coenzyme A carboxylase (ACC) complex. Biotin carboxylase (BC) catalyzes the carboxylation of biotin on its carrier protein (BCCP) and then the CO(2) group is transferred by the transcarboxylase to acetyl-CoA to form malonyl-CoA. In Cuscuta reflexa (Southern Asian dodder), this protein is Acetyl-coenzyme A carboxylase carboxyl transferase subunit beta.